Here is a 162-residue protein sequence, read N- to C-terminus: Selenoprotein F (162 aa).

Positions 1 to 28 (MAARRDGWLGPAFGLRLLLATVLQTVSA) are cleaved as a signal peptide. U93 is a non-standard amino acid (selenocysteine).

Belongs to the selenoprotein M/F family. In terms of assembly, forms a tight complex with UGGT1/UGCGL1. Interacts with UGGT2/UGCGL2. Interacts with RDH11.

It is found in the endoplasmic reticulum lumen. Functionally, may be involved in redox reactions associated with the formation of disulfide bonds. May contribute to the quality control of protein folding in the endoplasmic reticulum. May regulate protein folding by enhancing the catalytic activity of UGGT1/UGCGL1 and UGGT2/UGCGL2. In Bos taurus (Bovine), this protein is Selenoprotein F.